Here is a 428-residue protein sequence, read N- to C-terminus: 3-phosphoshikimate 1-carboxyvinyltransferase (428 aa).

Positions 21, 22, and 26 each coordinate 3-phosphoshikimate. Lys-21 provides a ligand contact to phosphoenolpyruvate. Positions 92 and 120 each coordinate phosphoenolpyruvate. Residues Ser-165, Gln-167, Asp-313, and Lys-340 each contribute to the 3-phosphoshikimate site. Gln-167 contributes to the phosphoenolpyruvate binding site. Asp-313 (proton acceptor) is an active-site residue. Positions 344 and 386 each coordinate phosphoenolpyruvate.

The protein belongs to the EPSP synthase family. Monomer.

It is found in the cytoplasm. The enzyme catalyses 3-phosphoshikimate + phosphoenolpyruvate = 5-O-(1-carboxyvinyl)-3-phosphoshikimate + phosphate. It functions in the pathway metabolic intermediate biosynthesis; chorismate biosynthesis; chorismate from D-erythrose 4-phosphate and phosphoenolpyruvate: step 6/7. Catalyzes the transfer of the enolpyruvyl moiety of phosphoenolpyruvate (PEP) to the 5-hydroxyl of shikimate-3-phosphate (S3P) to produce enolpyruvyl shikimate-3-phosphate and inorganic phosphate. In Carboxydothermus hydrogenoformans (strain ATCC BAA-161 / DSM 6008 / Z-2901), this protein is 3-phosphoshikimate 1-carboxyvinyltransferase.